The primary structure comprises 388 residues: Succinate--CoA ligase [ADP-forming] subunit beta (388 aa).

Residues 9–244 (KSLFAEYGLP…PSQDDAREAH (236 aa)) enclose the ATP-grasp domain. ATP contacts are provided by residues K46, 53-55 (GRG), E99, T102, and E107. N199 and D213 together coordinate Mg(2+). Residues N264 and 321 to 323 (GIV) each bind substrate.

The protein belongs to the succinate/malate CoA ligase beta subunit family. As to quaternary structure, heterotetramer of two alpha and two beta subunits. It depends on Mg(2+) as a cofactor.

The catalysed reaction is succinate + ATP + CoA = succinyl-CoA + ADP + phosphate. It catalyses the reaction GTP + succinate + CoA = succinyl-CoA + GDP + phosphate. Its pathway is carbohydrate metabolism; tricarboxylic acid cycle; succinate from succinyl-CoA (ligase route): step 1/1. Its function is as follows. Succinyl-CoA synthetase functions in the citric acid cycle (TCA), coupling the hydrolysis of succinyl-CoA to the synthesis of either ATP or GTP and thus represents the only step of substrate-level phosphorylation in the TCA. The beta subunit provides nucleotide specificity of the enzyme and binds the substrate succinate, while the binding sites for coenzyme A and phosphate are found in the alpha subunit. This chain is Succinate--CoA ligase [ADP-forming] subunit beta, found in Shewanella sp. (strain MR-4).